Consider the following 81-residue polypeptide: Large ribosomal subunit protein bL31B (81 aa).

It belongs to the bacterial ribosomal protein bL31 family. Type B subfamily. Part of the 50S ribosomal subunit.

The chain is Large ribosomal subunit protein bL31B from Cutibacterium acnes (strain DSM 16379 / KPA171202) (Propionibacterium acnes).